Reading from the N-terminus, the 198-residue chain is Recombination protein RecR (198 aa).

The C4-type zinc finger occupies C57–C72. The region spanning T80–A175 is the Toprim domain.

The protein belongs to the RecR family.

Functionally, may play a role in DNA repair. It seems to be involved in an RecBC-independent recombinational process of DNA repair. It may act with RecF and RecO. The polypeptide is Recombination protein RecR (Streptococcus pneumoniae (strain Hungary19A-6)).